A 486-amino-acid polypeptide reads, in one-letter code: B-type cell cycle switch protein ccs52B (486 aa).

A PEST motif motif is present at residues arginine 24 to serine 36. Residues threonine 27–serine 36 are compositionally biased toward polar residues. The interval threonine 27–aspartate 57 is disordered. Residues serine 41–serine 53 are compositionally biased toward low complexity. Residues aspartate 57 to arginine 63 carry the C-box motif. Residues alanine 87 to glycine 98 carry the CSM motif motif. 7 WD repeats span residues glutamine 177–leucine 214, glycine 218–threonine 257, glycine 260–glycine 297, glycine 301–arginine 340, glutamate 343–serine 385, aspartate 387–threonine 428, and glycine 431–alanine 470.

This sequence belongs to the WD repeat CDC20/Fizzy family. Mostly expressed in shoot apices and, to a lower extent, in roots, especially in root tips, and in hypocotyls. Expressed in nodulation-competent root zone but not in the nodules.

It functions in the pathway protein modification; protein ubiquitination. Functionally, component of the anaphase promoting complex/cyclosome (APC/C), a cell cycle-regulated E3 ubiquitin-protein ligase complex that controls progression through mitosis and the G1 phase of the cell cycle. The chain is B-type cell cycle switch protein ccs52B from Medicago truncatula (Barrel medic).